Consider the following 88-residue polypeptide: Putative septation protein SpoVG (88 aa).

Belongs to the SpoVG family.

Its function is as follows. Could be involved in septation. This chain is Putative septation protein SpoVG, found in Caldicellulosiruptor saccharolyticus (strain ATCC 43494 / DSM 8903 / Tp8T 6331).